The primary structure comprises 361 residues: Protein RecA (361 aa).

77-84 (GPESSGKT) lines the ATP pocket.

This sequence belongs to the RecA family.

It localises to the cytoplasm. Can catalyze the hydrolysis of ATP in the presence of single-stranded DNA, the ATP-dependent uptake of single-stranded DNA by duplex DNA, and the ATP-dependent hybridization of homologous single-stranded DNAs. It interacts with LexA causing its activation and leading to its autocatalytic cleavage. The polypeptide is Protein RecA (Brucella abortus (strain S19)).